Here is a 282-residue protein sequence, read N- to C-terminus: Bis(5'-nucleosyl)-tetraphosphatase, symmetrical (282 aa).

It belongs to the Ap4A hydrolase family.

The enzyme catalyses P(1),P(4)-bis(5'-adenosyl) tetraphosphate + H2O = 2 ADP + 2 H(+). Its function is as follows. Hydrolyzes diadenosine 5',5'''-P1,P4-tetraphosphate to yield ADP. The chain is Bis(5'-nucleosyl)-tetraphosphatase, symmetrical from Citrobacter koseri (strain ATCC BAA-895 / CDC 4225-83 / SGSC4696).